Here is a 347-residue protein sequence, read N- to C-terminus: Elongation factor Ts (347 aa).

The interval 80–83 is involved in Mg(2+) ion dislocation from EF-Tu; that stretch reads TDFV.

Belongs to the EF-Ts family.

It localises to the cytoplasm. Associates with the EF-Tu.GDP complex and induces the exchange of GDP to GTP. It remains bound to the aminoacyl-tRNA.EF-Tu.GTP complex up to the GTP hydrolysis stage on the ribosome. The sequence is that of Elongation factor Ts from Streptococcus sanguinis (strain SK36).